The chain runs to 645 residues: Putative galactocerebrosidase (645 aa).

A signal peptide spans 1-16 (MFSIFIKIILILPSIA). Positions 87 and 128 each coordinate substrate. Asn141 is a glycosylation site (N-linked (GlcNAc...) asparagine). Asn171 is a substrate binding site. Glu172 serves as the catalytic Proton donor/acceptor. N-linked (GlcNAc...) asparagine glycosylation is found at Asn174 and Asn193. Glu248 serves as the catalytic Nucleophile. Cysteines 261 and 365 form a disulfide. Asn274, Asn395, Asn411, Asn532, Asn616, Asn620, and Asn638 each carry an N-linked (GlcNAc...) asparagine glycan.

The protein belongs to the glycosyl hydrolase 59 family.

It carries out the reaction a beta-D-Gal-(1&lt;-&gt;1')-ceramide + H2O = an N-acyl-sphingoid base + D-galactose. The enzyme catalyses a beta-D-galactosyl-(1&lt;-&gt;1')-N-acylsphing-4-enine + H2O = an N-acylsphing-4-enine + D-galactose. Hydrolyzes the galactose ester bonds of galactosylceramide, galactosylsphingoid base, lactosylceramide, and monogalactosyldiglyceride. C.elegans contain specific sphingoid bases, which are unique or different in structure compared to the sphingoid bases found in other animals. Two examples of these distinctive compounds are: 15-methylhexadecasphinganine and 15-methylhexadecasphing-4-enine. The protein is Putative galactocerebrosidase of Caenorhabditis elegans.